We begin with the raw amino-acid sequence, 778 residues long: Lon protease (778 aa).

Positions 4–187 (LPVLPLTDAV…LLVGWVRAHL (184 aa)) constitute a Lon N-terminal domain. 346-353 (GPPGVGKT) provides a ligand contact to ATP. One can recognise a Lon proteolytic domain in the interval 581–762 (TAVPGVATGL…ADVLALALRP (182 aa)). Active-site residues include S668 and K711.

This sequence belongs to the peptidase S16 family. As to quaternary structure, homohexamer. Organized in a ring with a central cavity.

It localises to the cytoplasm. It catalyses the reaction Hydrolysis of proteins in presence of ATP.. In terms of biological role, ATP-dependent serine protease that mediates the selective degradation of mutant and abnormal proteins as well as certain short-lived regulatory proteins. Required for cellular homeostasis and for survival from DNA damage and developmental changes induced by stress. Degrades polypeptides processively to yield small peptide fragments that are 5 to 10 amino acids long. Binds to DNA in a double-stranded, site-specific manner. In Salinispora arenicola (strain CNS-205), this protein is Lon protease.